The sequence spans 232 residues: 2-C-methyl-D-erythritol 4-phosphate cytidylyltransferase (232 aa).

The protein belongs to the IspD/TarI cytidylyltransferase family. IspD subfamily.

It carries out the reaction 2-C-methyl-D-erythritol 4-phosphate + CTP + H(+) = 4-CDP-2-C-methyl-D-erythritol + diphosphate. Its pathway is isoprenoid biosynthesis; isopentenyl diphosphate biosynthesis via DXP pathway; isopentenyl diphosphate from 1-deoxy-D-xylulose 5-phosphate: step 2/6. In terms of biological role, catalyzes the formation of 4-diphosphocytidyl-2-C-methyl-D-erythritol from CTP and 2-C-methyl-D-erythritol 4-phosphate (MEP). In Vibrio cholerae serotype O1 (strain ATCC 39315 / El Tor Inaba N16961), this protein is 2-C-methyl-D-erythritol 4-phosphate cytidylyltransferase.